We begin with the raw amino-acid sequence, 232 residues long: MSNVDHAEIAKFEALAHRWWDRESEFKPLHDINPLRVNWIDERAGLAGKKVLDIGCGGGILSEAMAQRGASVTGIDMGEAPLAVARLHQLESGVAVDYRQITAEQMAEEMPGQFDVVTCLEMLEHVPDPASVIRACHRLVKPGGQVFLSTINRNPKAYLFAVIGAEYILQLLPRGTHDFRKFIRPSELGAWSREAGLEVKDIIGLTYNPLTKHYKLANDVDVNYMVQTKREA.

S-adenosyl-L-methionine contacts are provided by Arg36, Gly55, Asp76, and Leu120.

Belongs to the methyltransferase superfamily. UbiG/COQ3 family.

It carries out the reaction a 3-demethylubiquinol + S-adenosyl-L-methionine = a ubiquinol + S-adenosyl-L-homocysteine + H(+). The catalysed reaction is a 3-(all-trans-polyprenyl)benzene-1,2-diol + S-adenosyl-L-methionine = a 2-methoxy-6-(all-trans-polyprenyl)phenol + S-adenosyl-L-homocysteine + H(+). It participates in cofactor biosynthesis; ubiquinone biosynthesis. Functionally, O-methyltransferase that catalyzes the 2 O-methylation steps in the ubiquinone biosynthetic pathway. This chain is Ubiquinone biosynthesis O-methyltransferase, found in Pseudomonas aeruginosa (strain ATCC 15692 / DSM 22644 / CIP 104116 / JCM 14847 / LMG 12228 / 1C / PRS 101 / PAO1).